We begin with the raw amino-acid sequence, 188 residues long: Peptidyl-tRNA hydrolase (188 aa).

Phe15 is a tRNA binding site. His20 acts as the Proton acceptor in catalysis. Tyr64, Asn66, and Asn112 together coordinate tRNA.

This sequence belongs to the PTH family. As to quaternary structure, monomer.

It localises to the cytoplasm. The catalysed reaction is an N-acyl-L-alpha-aminoacyl-tRNA + H2O = an N-acyl-L-amino acid + a tRNA + H(+). Hydrolyzes ribosome-free peptidyl-tRNAs (with 1 or more amino acids incorporated), which drop off the ribosome during protein synthesis, or as a result of ribosome stalling. Its function is as follows. Catalyzes the release of premature peptidyl moieties from peptidyl-tRNA molecules trapped in stalled 50S ribosomal subunits, and thus maintains levels of free tRNAs and 50S ribosomes. In Borreliella afzelii (strain PKo) (Borrelia afzelii), this protein is Peptidyl-tRNA hydrolase.